A 186-amino-acid chain; its full sequence is Translation initiation factor IF-3 (186 aa).

It belongs to the IF-3 family. As to quaternary structure, monomer.

Its subcellular location is the cytoplasm. IF-3 binds to the 30S ribosomal subunit and shifts the equilibrium between 70S ribosomes and their 50S and 30S subunits in favor of the free subunits, thus enhancing the availability of 30S subunits on which protein synthesis initiation begins. The polypeptide is Translation initiation factor IF-3 (Borreliella afzelii (strain PKo) (Borrelia afzelii)).